A 333-amino-acid chain; its full sequence is tRNA-dihydrouridine(16) synthase (333 aa).

Residues 19 to 21 and glutamine 80 contribute to the FMN site; that span reads PMQ. Cysteine 110 functions as the Proton donor in the catalytic mechanism. FMN is bound by residues lysine 151, 211–213, and 235–236; these read NGD and GR.

This sequence belongs to the Dus family. DusC subfamily. The cofactor is FMN.

It catalyses the reaction 5,6-dihydrouridine(16) in tRNA + NADP(+) = uridine(16) in tRNA + NADPH + H(+). The enzyme catalyses 5,6-dihydrouridine(16) in tRNA + NAD(+) = uridine(16) in tRNA + NADH + H(+). Functionally, catalyzes the synthesis of 5,6-dihydrouridine (D), a modified base found in the D-loop of most tRNAs, via the reduction of the C5-C6 double bond in target uridines. Specifically modifies U16 in tRNAs. The sequence is that of tRNA-dihydrouridine(16) synthase from Neisseria meningitidis serogroup B (strain ATCC BAA-335 / MC58).